A 160-amino-acid chain; its full sequence is Cytochrome b6-f complex subunit 4 (160 aa).

3 consecutive transmembrane segments (helical) span residues 36–56 (LLYV…ALAV), 95–115 (LLGV…PFIE), and 131–151 (TVFL…ALPL).

It belongs to the cytochrome b family. PetD subfamily. In terms of assembly, the 4 large subunits of the cytochrome b6-f complex are cytochrome b6, subunit IV (17 kDa polypeptide, PetD), cytochrome f and the Rieske protein, while the 4 small subunits are PetG, PetL, PetM and PetN. The complex functions as a dimer.

The protein localises to the cellular thylakoid membrane. Functionally, component of the cytochrome b6-f complex, which mediates electron transfer between photosystem II (PSII) and photosystem I (PSI), cyclic electron flow around PSI, and state transitions. The polypeptide is Cytochrome b6-f complex subunit 4 (Desmonostoc sp. (strain PCC 7906) (Nostoc sp. (strain PCC 7906))).